Reading from the N-terminus, the 179-residue chain is Large ribosomal subunit protein uL5 (179 aa).

Belongs to the universal ribosomal protein uL5 family. Part of the 50S ribosomal subunit; part of the 5S rRNA/L5/L18/L25 subcomplex. Contacts the 5S rRNA and the P site tRNA. Forms a bridge to the 30S subunit in the 70S ribosome.

Its function is as follows. This is one of the proteins that bind and probably mediate the attachment of the 5S RNA into the large ribosomal subunit, where it forms part of the central protuberance. In the 70S ribosome it contacts protein S13 of the 30S subunit (bridge B1b), connecting the 2 subunits; this bridge is implicated in subunit movement. Contacts the P site tRNA; the 5S rRNA and some of its associated proteins might help stabilize positioning of ribosome-bound tRNAs. The protein is Large ribosomal subunit protein uL5 of Prochlorococcus marinus (strain MIT 9215).